We begin with the raw amino-acid sequence, 538 residues long: MSFSATILFSPPSGSEARCCCCACKSETNGGNTGSQGGNPPPSTPITVTGHGLAVQSSEQLLHVIYQRVDKAVGLAEAALGLARANNELLKRLQEEVGDLRQGKVSIPDEDGESRAHSSPPEEPGPLKESPGEAFKALSAVEEECDSVGSGVQVVIEELRQLGAASVGPGPLGFPATQRDMRLPGCTLAASEAAPLLNPLVDDYVASEGAVQRVLVPAYAKQLSPATQLAIQRATPETGPENGTKLPPPRPEDMLNAAAALDSALEESGPGSTGELRHSLGLTVSPCRTRGSGQKNSRRKRDLVLSKLVHNVHNHITNDKRFNGSESIKSSWNISVVKFLLEKLKQELVTSPHNYTDKELKGACVAYFLTKRREYRNSLNPFKGLKEKEEKKLRSRRYRLFANRSSIMRHFGPEDQRLWNDVTEELMSDEEDSLNEPGVWVARPPRFRAQRLTELCYHLDANSKHGTKANRVYGPPSDRLPSAEAQLLPPELYNPNFQEEEDEGGDENAPGSPSFDQPHKTCCPDLNSFIEIKVEKDE.

A signal peptide spans 1–17; the sequence is MSFSATILFSPPSGSEA. The segment at 101–131 is disordered; it reads RQGKVSIPDEDGESRAHSSPPEEPGPLKESP. Residues K128 and K221 each participate in a glycyl lysine isopeptide (Lys-Gly) (interchain with G-Cter in SUMO2) cross-link. The residue at position 224 (S224) is a Phosphoserine. The segment at 233–253 is disordered; that stretch reads RATPETGPENGTKLPPPRPED. Phosphoserine is present on residues S285 and S428. A disordered region spans residues 488-523; sequence LPPELYNPNFQEEEDEGGDENAPGSPSFDQPHKTCC.

The protein localises to the secreted. This is an uncharacterized protein from Homo sapiens (Human).